The sequence spans 283 residues: Bis(5'-nucleosyl)-tetraphosphatase, symmetrical (283 aa).

This sequence belongs to the Ap4A hydrolase family.

The catalysed reaction is P(1),P(4)-bis(5'-adenosyl) tetraphosphate + H2O = 2 ADP + 2 H(+). Its function is as follows. Hydrolyzes diadenosine 5',5'''-P1,P4-tetraphosphate to yield ADP. The sequence is that of Bis(5'-nucleosyl)-tetraphosphatase, symmetrical from Pseudomonas paraeruginosa (strain DSM 24068 / PA7) (Pseudomonas aeruginosa (strain PA7)).